The following is a 206-amino-acid chain: Large ribosomal subunit protein uL4 (206 aa).

Residues 48–59 (THDTKTRSEVRG) show a composition bias toward basic and acidic residues. The interval 48 to 77 (THDTKTRSEVRGGGRKPWRQKGTGRARHGS) is disordered. The span at 60 to 77 (GGRKPWRQKGTGRARHGS) shows a compositional bias: basic residues.

Belongs to the universal ribosomal protein uL4 family. As to quaternary structure, part of the 50S ribosomal subunit.

In terms of biological role, one of the primary rRNA binding proteins, this protein initially binds near the 5'-end of the 23S rRNA. It is important during the early stages of 50S assembly. It makes multiple contacts with different domains of the 23S rRNA in the assembled 50S subunit and ribosome. Forms part of the polypeptide exit tunnel. The sequence is that of Large ribosomal subunit protein uL4 from Pelotomaculum thermopropionicum (strain DSM 13744 / JCM 10971 / SI).